A 244-amino-acid polypeptide reads, in one-letter code: Glucosamine-6-phosphate deaminase (244 aa).

The Proton acceptor; for enolization step role is filled by Asp67. Catalysis depends on Asn136, which acts as the For ring-opening step. His138 (proton acceptor; for ring-opening step) is an active-site residue. Residue Glu143 is the For ring-opening step of the active site.

The protein belongs to the glucosamine/galactosamine-6-phosphate isomerase family. NagB subfamily.

It carries out the reaction alpha-D-glucosamine 6-phosphate + H2O = beta-D-fructose 6-phosphate + NH4(+). It functions in the pathway amino-sugar metabolism; N-acetylneuraminate degradation; D-fructose 6-phosphate from N-acetylneuraminate: step 5/5. Its function is as follows. Catalyzes the reversible isomerization-deamination of glucosamine 6-phosphate (GlcN6P) to form fructose 6-phosphate (Fru6P) and ammonium ion. This Clostridium botulinum (strain 657 / Type Ba4) protein is Glucosamine-6-phosphate deaminase.